The sequence spans 500 residues: Lysine--tRNA ligase (500 aa).

Mg(2+) contacts are provided by Glu410 and Glu417.

It belongs to the class-II aminoacyl-tRNA synthetase family. In terms of assembly, homodimer. The cofactor is Mg(2+).

The protein localises to the cytoplasm. The enzyme catalyses tRNA(Lys) + L-lysine + ATP = L-lysyl-tRNA(Lys) + AMP + diphosphate. The chain is Lysine--tRNA ligase from Shewanella putrefaciens (strain CN-32 / ATCC BAA-453).